Consider the following 330-residue polypeptide: Aspartate--ammonia ligase (330 aa).

The protein belongs to the class-II aminoacyl-tRNA synthetase family. AsnA subfamily.

Its subcellular location is the cytoplasm. It catalyses the reaction L-aspartate + NH4(+) + ATP = L-asparagine + AMP + diphosphate + H(+). It participates in amino-acid biosynthesis; L-asparagine biosynthesis; L-asparagine from L-aspartate (ammonia route): step 1/1. The polypeptide is Aspartate--ammonia ligase (Streptococcus pyogenes serotype M1).